The sequence spans 1202 residues: Phospholipid-transporting ATPase 10 (1202 aa).

Over 1–73 (MAGPSRRRRR…STKYTVASFF (73 aa)) the chain is Cytoplasmic. The helical transmembrane segment at 74–95 (PKSLFEQFRRVANFYFLVTGIL) threads the bilayer. The Extracellular segment spans residues 96-99 (SLTD). Residues 100–122 (LSPYGAVSALLPLALVISATMVK) form a helical membrane-spanning segment. The Cytoplasmic portion of the chain corresponds to 123–305 (EGIEDWRRKQ…SRIERTMDKI (183 aa)). The chain crosses the membrane as a helical span at residues 306–327 (IYLMFGLVFLMSFVGSIIFGVE). Over 328-364 (TREDKVKNGRTERWYLKPDDADIFFDPERAPMAAIYH) the chain is Extracellular. The chain crosses the membrane as a helical span at residues 365–382 (FFTATMLYSYFIPISLYV). Over 383 to 920 (SIEIVKVLQS…HGHWCYSRIA (538 aa)) the chain is Cytoplasmic. Asp-430 serves as the catalytic 4-aspartylphosphate intermediate. Residues Asp-865 and Asp-869 each coordinate Mg(2+). A helical transmembrane segment spans residues 921–940 (SMICYFFYKNITFGVTVFLY). The Extracellular portion of the chain corresponds to 941-954 (EAYTSFSGQPAYND). A helical transmembrane segment spans residues 955–974 (WFLSLFNVFFSSLPVIALGV). The Cytoplasmic segment spans residues 975-1004 (FDQDVSARFCYKFPLLYQEGVQNILFSWKR). A helical transmembrane segment spans residues 1005–1027 (IIGWMFNGFISALAIFFLCKESL). Residues 1028 to 1040 (KHQLFDPDGKTAG) are Extracellular-facing. The helical transmembrane segment at 1041 to 1063 (REILGGTMYTCVVWVVNLQMALS) threads the bilayer. At 1064–1069 (ISYFTW) the chain is on the cytoplasmic side. Residues 1070–1090 (VQHIVIWGSIAFWYIFLMIYG) form a helical membrane-spanning segment. Residues 1091 to 1107 (AMTPSFSTDAYMVFLEA) lie on the Extracellular side of the membrane. The chain crosses the membrane as a helical span at residues 1108–1132 (LAPAPSYWLTTLFVMIFALIPYFVY). At 1133-1202 (KSVQMRFFPK…DQIYKDLVGV (70 aa)) the chain is on the cytoplasmic side.

It belongs to the cation transport ATPase (P-type) (TC 3.A.3) family. Type IV subfamily.

The protein resides in the cell membrane. It carries out the reaction ATP + H2O + phospholipidSide 1 = ADP + phosphate + phospholipidSide 2.. Functionally, involved in transport of phospholipids. The sequence is that of Phospholipid-transporting ATPase 10 from Arabidopsis thaliana (Mouse-ear cress).